Reading from the N-terminus, the 270-residue chain is Abhydrolase domain-containing protein C22H12.03 (270 aa).

The region spanning 21 to 257 is the AB hydrolase-1 domain; the sequence is PPVLIFHGLL…CGHWVHFEKP (237 aa). Residues Ser-95, Glu-190, and His-250 each act as charge relay system in the active site.

It belongs to the AB hydrolase superfamily.

The protein localises to the mitochondrion. The polypeptide is Abhydrolase domain-containing protein C22H12.03 (Schizosaccharomyces pombe (strain 972 / ATCC 24843) (Fission yeast)).